A 140-amino-acid chain; its full sequence is ATP synthase epsilon chain (140 aa).

The protein belongs to the ATPase epsilon chain family. F-type ATPases have 2 components, CF(1) - the catalytic core - and CF(0) - the membrane proton channel. CF(1) has five subunits: alpha(3), beta(3), gamma(1), delta(1), epsilon(1). CF(0) has three main subunits: a, b and c.

Its subcellular location is the cell inner membrane. Its function is as follows. Produces ATP from ADP in the presence of a proton gradient across the membrane. The chain is ATP synthase epsilon chain from Legionella pneumophila (strain Paris).